The primary structure comprises 312 residues: Deoxyribonuclease Tat-D (312 aa).

A divalent metal cation is bound by residues Glu124, His161, His187, and Asp235.

This sequence belongs to the metallo-dependent hydrolases superfamily. TatD-type hydrolase family. A divalent metal cation serves as cofactor.

The protein resides in the cytoplasm. The protein localises to the nucleus. In terms of biological role, has both endo- and exonuclease activities. Incises double-stranded DNA without obvious specificity via its endonuclease activity and excises the DNA from the 3'-to 5'-end by its exonuclease activity. May have a role in apoptosis. The chain is Deoxyribonuclease Tat-D from Schizosaccharomyces pombe (strain 972 / ATCC 24843) (Fission yeast).